Reading from the N-terminus, the 903-residue chain is Dual serine/threonine and tyrosine protein kinase (903 aa).

Positions 382-414 form a coiled coil; the sequence is ANRKQEEMKEMIVETLESMKEQLLEDAANLEFT. One can recognise a Protein kinase domain in the interval 627–881; it reads PKLGRELGRG…PLLGIVQPSL (255 aa). ATP contacts are provided by residues 633-641 and Lys656; that span reads LGRGQYGVV. Catalysis depends on Asp752, which acts as the Proton acceptor.

The protein belongs to the protein kinase superfamily. Ser/Thr protein kinase family.

The protein localises to the cytoplasm. It is found in the cell membrane. The protein resides in the apical cell membrane. It localises to the basolateral cell membrane. Its subcellular location is the cell junction. It carries out the reaction L-seryl-[protein] + ATP = O-phospho-L-seryl-[protein] + ADP + H(+). The catalysed reaction is L-threonyl-[protein] + ATP = O-phospho-L-threonyl-[protein] + ADP + H(+). The enzyme catalyses L-tyrosyl-[protein] + ATP = O-phospho-L-tyrosyl-[protein] + ADP + H(+). In terms of biological role, may act as a positive regulator of ERK phosphorylation downstream of fibroblast growth factor-receptor activation. May induce both caspase-dependent apoptosis and caspase-independent cell death. May play a role in the embryonic development. The chain is Dual serine/threonine and tyrosine protein kinase from Pimephales promelas (Fathead minnow).